A 453-amino-acid chain; its full sequence is Magnesium transporter MgtE (453 aa).

Residues methionine 1 to arginine 286 are Cytoplasmic-facing. Positions 71, 98, 102, 136, 140, 176, 227, 230, 233, 251, and 259 each coordinate Mg(2+). 2 consecutive CBS domains span residues methionine 142–isoleucine 205 and leucine 206–serine 262. A helical membrane pass occupies residues leucine 287–tyrosine 307. Position 308 (glutamate 308) is a topological domain, extracellular. Residues serine 309–glycine 329 form a helical membrane-spanning segment. At asparagine 330–glutamate 360 the chain is on the cytoplasmic side. The chain crosses the membrane as a helical span at residues valine 361–valine 381. Topologically, residues tryptophan 382–glycine 389 are extracellular. The helical transmembrane segment at phenylalanine 390 to isoleucine 410 threads the bilayer. Residues proline 411–proline 427 lie on the Cytoplasmic side of the membrane. Residues phenylalanine 428–phenylalanine 448 form a helical membrane-spanning segment. Aspartate 434 lines the Mg(2+) pocket. The Extracellular portion of the chain corresponds to methionine 449–valine 453.

It belongs to the SLC41A transporter family. Homodimer.

The protein resides in the cell membrane. It catalyses the reaction Mg(2+)(in) = Mg(2+)(out). In terms of biological role, acts as a magnesium transporter. The sequence is that of Magnesium transporter MgtE from Enterococcus faecalis (strain ATCC 700802 / V583).